The following is a 709-amino-acid chain: Alpha-1,2-mannosyltransferase MNN24 (709 aa).

Residues 1–9 lie on the Cytoplasmic side of the membrane; sequence MFSIPVSSK. The helical transmembrane segment at 10–30 threads the bilayer; the sequence is TVRLILVSLLLITLINILAAF. Over 31-709 the chain is Extracellular; that stretch reads QRSTLSSWFP…KNHIEFLEIS (679 aa). The N-linked (GlcNAc...) asparagine glycan is linked to N317.

It belongs to the MNN1/MNT family.

The protein localises to the golgi apparatus membrane. Its pathway is protein modification; protein glycosylation. Alpha-1,2-mannosyltransferase required for cell wall integrity. Responsible for addition of the first alpha-1,2-linked mannose to form the branches on the mannan backbone of oligosaccharides. Addition of alpha-1,2-mannose is required for stabilization of the alpha-1,6-mannose backbone and hence regulates mannan fibril length; and is important for both immune recognition and virulence. In Candida albicans (strain SC5314 / ATCC MYA-2876) (Yeast), this protein is Alpha-1,2-mannosyltransferase MNN24 (MNN24).